The chain runs to 57 residues: Large ribosomal subunit protein bL32 (57 aa).

Positions 1-20 (MAVPKKKTSKAKRDQRRATW) are enriched in basic residues. Residues 1–24 (MAVPKKKTSKAKRDQRRATWRRQA) are disordered.

This sequence belongs to the bacterial ribosomal protein bL32 family.

The chain is Large ribosomal subunit protein bL32 from Gloeothece citriformis (strain PCC 7424) (Cyanothece sp. (strain PCC 7424)).